The primary structure comprises 352 residues: Phosphoribosylformylglycinamidine cyclo-ligase (352 aa).

This sequence belongs to the AIR synthase family.

The protein localises to the cytoplasm. The catalysed reaction is 2-formamido-N(1)-(5-O-phospho-beta-D-ribosyl)acetamidine + ATP = 5-amino-1-(5-phospho-beta-D-ribosyl)imidazole + ADP + phosphate + H(+). It functions in the pathway purine metabolism; IMP biosynthesis via de novo pathway; 5-amino-1-(5-phospho-D-ribosyl)imidazole from N(2)-formyl-N(1)-(5-phospho-D-ribosyl)glycinamide: step 2/2. This is Phosphoribosylformylglycinamidine cyclo-ligase from Ectopseudomonas mendocina (strain ymp) (Pseudomonas mendocina).